The chain runs to 471 residues: Ribulose bisphosphate carboxylase large chain (471 aa).

2 residues coordinate substrate: asparagine 115 and threonine 165. Lysine 167 functions as the Proton acceptor in the catalytic mechanism. Lysine 169 is a binding site for substrate. Mg(2+) contacts are provided by lysine 193, aspartate 195, and glutamate 196. Residue lysine 193 is modified to N6-carboxylysine. The active-site Proton acceptor is the histidine 286. The substrate site is built by arginine 287, histidine 319, and serine 371.

Belongs to the RuBisCO large chain family. Type I subfamily. In terms of assembly, heterohexadecamer of 8 large chains and 8 small chains. The cofactor is Mg(2+).

It localises to the carboxysome. It catalyses the reaction 2 (2R)-3-phosphoglycerate + 2 H(+) = D-ribulose 1,5-bisphosphate + CO2 + H2O. It carries out the reaction D-ribulose 1,5-bisphosphate + O2 = 2-phosphoglycolate + (2R)-3-phosphoglycerate + 2 H(+). Its function is as follows. RuBisCO catalyzes two reactions: the carboxylation of D-ribulose 1,5-bisphosphate, the primary event in carbon dioxide fixation, as well as the oxidative fragmentation of the pentose substrate in the photorespiration process. Both reactions occur simultaneously and in competition at the same active site. The polypeptide is Ribulose bisphosphate carboxylase large chain (Synechococcus sp. (strain WH7803)).